Here is a 288-residue protein sequence, read N- to C-terminus: Protease HtpX (288 aa).

Helical transmembrane passes span 5–25 (IALF…VMSL) and 35–55 (GLLV…LLLS). H140 provides a ligand contact to Zn(2+). E141 is a catalytic residue. H144 is a binding site for Zn(2+). Helical transmembrane passes span 155-175 (LLQG…GGII) and 194-214 (IIVF…SMWF). E219 is a binding site for Zn(2+).

This sequence belongs to the peptidase M48B family. Zn(2+) serves as cofactor.

The protein resides in the cell inner membrane. This Stenotrophomonas maltophilia (strain K279a) protein is Protease HtpX.